Consider the following 273-residue polypeptide: Hydroxyethylthiazole kinase (273 aa).

Met41 provides a ligand contact to substrate. Positions 117 and 170 each coordinate ATP. Gly197 serves as a coordination point for substrate.

This sequence belongs to the Thz kinase family. The cofactor is Mg(2+).

The enzyme catalyses 5-(2-hydroxyethyl)-4-methylthiazole + ATP = 4-methyl-5-(2-phosphooxyethyl)-thiazole + ADP + H(+). It participates in cofactor biosynthesis; thiamine diphosphate biosynthesis; 4-methyl-5-(2-phosphoethyl)-thiazole from 5-(2-hydroxyethyl)-4-methylthiazole: step 1/1. In terms of biological role, catalyzes the phosphorylation of the hydroxyl group of 4-methyl-5-beta-hydroxyethylthiazole (THZ). The polypeptide is Hydroxyethylthiazole kinase (Clostridium acetobutylicum (strain ATCC 824 / DSM 792 / JCM 1419 / IAM 19013 / LMG 5710 / NBRC 13948 / NRRL B-527 / VKM B-1787 / 2291 / W)).